We begin with the raw amino-acid sequence, 333 residues long: Fibronectin type III domain-containing protein 11 (333 aa).

Residues 212–310 form the Fibronectin type-III domain; sequence PVMFDRKESV…DSLTLHTRPG (99 aa). A disordered region spans residues 307 to 333; sequence TRPGPPEGLAPSRLGKLGLSLTTPSER.

The protein is Fibronectin type III domain-containing protein 11 of Bos taurus (Bovine).